We begin with the raw amino-acid sequence, 252 residues long: ATP synthase subunit a, chloroplastic (252 aa).

5 helical membrane-spanning segments follow: residues 41 to 61 (GQVLITSWIVLGGVIIFTLLA), 100 to 120 (VPFLGTIFIFVFVSNWAGALL), 138 to 158 (DINTTVSLALLTSVSYFYAGI), 204 to 224 (LIVGVLVALVPLFVPIPLMLL), and 225 to 245 (GVFTSAIQALVFATLAGAYIG).

This sequence belongs to the ATPase A chain family. F-type ATPases have 2 components, CF(1) - the catalytic core - and CF(0) - the membrane proton channel. CF(1) has five subunits: alpha(3), beta(3), gamma(1), delta(1), epsilon(1). CF(0) has four main subunits: a, b, b' and c.

It is found in the plastid. The protein resides in the chloroplast thylakoid membrane. Its function is as follows. Key component of the proton channel; it plays a direct role in the translocation of protons across the membrane. This chain is ATP synthase subunit a, chloroplastic, found in Oedogonium cardiacum (Filamentous green alga).